The chain runs to 208 residues: Small ribosomal subunit protein uS4 (208 aa).

The S4 RNA-binding domain maps to 98-164; sequence TRLDNVVYRL…PKVKSIREIA (67 aa).

Belongs to the universal ribosomal protein uS4 family. As to quaternary structure, part of the 30S ribosomal subunit. Contacts protein S5. The interaction surface between S4 and S5 is involved in control of translational fidelity.

Functionally, one of the primary rRNA binding proteins, it binds directly to 16S rRNA where it nucleates assembly of the body of the 30S subunit. In terms of biological role, with S5 and S12 plays an important role in translational accuracy. This chain is Small ribosomal subunit protein uS4, found in Ruminiclostridium cellulolyticum (strain ATCC 35319 / DSM 5812 / JCM 6584 / H10) (Clostridium cellulolyticum).